An 81-amino-acid chain; its full sequence is ATP synthase subunit C, plastid (81 aa).

A run of 2 helical transmembrane segments spans residues 3-23 (PLIP…ASIG) and 61-81 (EALT…NPFI).

It belongs to the ATPase C chain family. As to quaternary structure, F-type ATPases have 2 components, F(1) - the catalytic core - and F(0) - the membrane proton channel. F(1) has five subunits: alpha(3), beta(3), gamma(1), delta(1), epsilon(1). F(0) has four main subunits: a(1), b(1), b'(1) and c(10-14). The alpha and beta chains form an alternating ring which encloses part of the gamma chain. F(1) is attached to F(0) by a central stalk formed by the gamma and epsilon chains, while a peripheral stalk is formed by the delta, b and b' chains.

It is found in the plastid membrane. Its function is as follows. F(1)F(0) ATP synthase produces ATP from ADP in the presence of a proton or sodium gradient. F-type ATPases consist of two structural domains, F(1) containing the extramembraneous catalytic core and F(0) containing the membrane proton channel, linked together by a central stalk and a peripheral stalk. During catalysis, ATP synthesis in the catalytic domain of F(1) is coupled via a rotary mechanism of the central stalk subunits to proton translocation. Functionally, key component of the F(0) channel; it plays a direct role in translocation across the membrane. A homomeric c-ring of between 10-14 subunits forms the central stalk rotor element with the F(1) delta and epsilon subunits. The chain is ATP synthase subunit C, plastid from Aneura mirabilis (Parasitic liverwort).